Consider the following 312-residue polypeptide: Glutathione synthetase (312 aa).

An ATP-grasp domain is found at 125-309; the sequence is KIFVTEFPDL…IAALFWDAVE (185 aa). 151–207 is a binding site for ATP; that stretch reads RREFGDIILKPLYGNGGAGVFHLADGDRNLTSLLEMFGQLFREPFIAQRYLKDVRAG. Glutamate 280 and asparagine 282 together coordinate Mg(2+).

The protein belongs to the prokaryotic GSH synthase family. Mg(2+) is required as a cofactor. It depends on Mn(2+) as a cofactor.

It carries out the reaction gamma-L-glutamyl-L-cysteine + glycine + ATP = glutathione + ADP + phosphate + H(+). Its pathway is sulfur metabolism; glutathione biosynthesis; glutathione from L-cysteine and L-glutamate: step 2/2. This chain is Glutathione synthetase, found in Brucella melitensis biotype 1 (strain ATCC 23456 / CCUG 17765 / NCTC 10094 / 16M).